We begin with the raw amino-acid sequence, 1026 residues long: uncharacterized protein (1026 aa).

4 WD repeats span residues 14 to 53, 62 to 104, 148 to 187, and 937 to 977; these read LLDE…HFTL, HSVS…RRAT, GHED…LTFK, and NAEC…VKFL.

It localises to the cytoplasm. It is found in the nucleus. This is an uncharacterized protein from Schizosaccharomyces pombe (strain 972 / ATCC 24843) (Fission yeast).